The sequence spans 536 residues: GPI alpha-1,2-mannosyltransferase 3 (536 aa).

N15 is a glycosylation site (N-linked (GlcNAc...) asparagine). The next 2 helical transmembrane spans lie at 40–60 (IFGINITVFIVLVRLLNCVLV) and 118–138 (VYLLVFVPRVFQALLAAYADV). N176 is a glycosylation site (N-linked (GlcNAc...) asparagine). 6 consecutive transmembrane segments (helical) span residues 206 to 226 (LVSLAVVIRPTALIVWFPLIF), 243 to 263 (YFPIGVLALGVSTLIDSFFYG), 297 to 317 (GLPVVIGPHLPLVLHGCLLST), 322 to 342 (ILLLTIIWTTAVYSLLAHKEF), 344 to 364 (FIYPVLPFCMIFCGLSLAKLQ), and 369 to 389 (AAAGALLLFNLCPALYTGLVH). A glycan (N-linked (GlcNAc...) asparagine) is linked at N467.

It belongs to the glycosyltransferase 22 family. PIGB subfamily.

The protein localises to the endoplasmic reticulum membrane. The protein operates within glycolipid biosynthesis; glycosylphosphatidylinositol-anchor biosynthesis. Its function is as follows. Alpha-1,2-mannosyltransferase that catalyzes the transfer of the third mannose, via an alpha-1,2 bond, from a dolichol-phosphate-mannose (Dol-P-Man) to an alpha-D-Man-(1-&gt;6)-2-PEtn-alpha-D-Man-(1-&gt;4)-alpha-D-GlcN-(1-&gt;6)-(1-radyl,2-acyl-sn-glycero-3-phospho)-2-acyl-inositol intermediate to generate an alpha-D-Man-(1-&gt;2)-alpha-D-Man-(1-&gt;6)-2-PEtn-alpha-D-Man-(1-&gt;4)-alpha-D-GlcN-(1-&gt;6)-(1-radyl,2-acyl-sn-glycero-3-phospho)-2-acyl-inositol (also termed H6) and participates in the nineth step of the glycosylphosphatidylinositol-anchor biosynthesis. May also add the third mannose to an alpha-D-Man-(1-&gt;6)-alpha-D-Man-(1-&gt;4)-alpha-D-GlcN-(1-&gt;6)-(1-radyl,2-acyl-sn-glycero-3-phospho)-2-acyl-inositol (also termed H3) intermediate generating an alpha-D-Man-(1-&gt;2)-alpha-D-Man-(1-&gt;6)-alpha-D-Man-(1-&gt;4)-alpha-D-GlcN-(1-&gt;6)-(1-radyl,2-acyl-sn-glycero-3-phospho)-2-acyl-inositol (also termed H4). This Danio rerio (Zebrafish) protein is GPI alpha-1,2-mannosyltransferase 3.